We begin with the raw amino-acid sequence, 497 residues long: MGLPALLASALCTFVLPLLLFLAALKLWDLYCVSSRDRSCALPLPPGTMGFPFFGETLQMVLQRRKFLQMKRRKYGFIYKTHLFGRPTVRVMGADNVRRILLGEHRLVSVHWPASVRTILGAGCLSNLHDSSHKQRKKVIMQAFSREALQCYVLVIAEEVSSCLEQWLSCGERGLLVYPEVKRLMFRIAMRILLGCEPGPAGGGEDEQQLVEAFEEMTRNLFSLPIDVPFSGLYRGVKARNLIHARIEENIRAKIRRLQATEPDGGCKDALQLLIEHSWERGERLDMQALKQSSTELLFGGHETTASAATSLITYLGLYPHVLQKVREEIKSKGLLCKSNQDNKLDMETLEQLKYIGCVIKETLRLNPPVPGGFRVALKTFELNGYQIPKGWNVIYSICDTHDVADIFTNKEEFNPDRFIVPHPEDASRFSFIPFGGGLRSCVGKEFAKILLKIFTVELARHCDWQLLNGPPTMKTSPTVYPVDNLPARFTYFQGDI.

Cysteine 442 contributes to the heme binding site.

Belongs to the cytochrome P450 family. Requires heme as cofactor.

The protein localises to the endoplasmic reticulum membrane. The protein resides in the microsome membrane. It carries out the reaction all-trans-retinoate + reduced [NADPH--hemoprotein reductase] + O2 = all-trans-(4S)-hydroxyretinoate + oxidized [NADPH--hemoprotein reductase] + H2O + H(+). The catalysed reaction is all-trans-(4S)-hydroxyretinoate + reduced [NADPH--hemoprotein reductase] + O2 = all-trans-(4S,16)-dihydroxyretinoate + oxidized [NADPH--hemoprotein reductase] + H2O + H(+). The enzyme catalyses all-trans-retinoate + reduced [NADPH--hemoprotein reductase] + O2 = all-trans-18-hydroxyretinoate + oxidized [NADPH--hemoprotein reductase] + H2O + H(+). Functionally, a cytochrome P450 monooxygenase involved in the metabolism of retinoates (RAs), the active metabolites of vitamin A, and critical signaling molecules in animals. RAs exist as at least four different isomers: all-trans-RA (atRA), 9-cis-RA, 13-cis-RA, and 9,13-dicis-RA, where atRA is considered to be the biologically active isomer, although 9-cis-RA and 13-cis-RA also have activity. Catalyzes the hydroxylation of atRA primarily at C-4 and C-18, thereby contributing to the regulation of atRA homeostasis and signaling. Hydroxylation of atRA limits its biological activity and initiates a degradative process leading to its eventual elimination. Involved in the convertion of atRA to all-trans-4-oxo-RA. Able to metabolize other RAs such as 9-cis, 13-cis and 9,13-di-cis RA. Can oxidize all-trans-13,14-dihydroretinoate (DRA) to metabolites which could include all-trans-4-oxo-DRA, all-trans-4-hydroxy-DRA, all-trans-5,8-epoxy-DRA, and all-trans-18-hydroxy-DRA. May play a role in the oxidative metabolism of xenobiotics such as tazarotenic acid. The polypeptide is Cytochrome P450 26A1 (Mus musculus (Mouse)).